A 666-amino-acid chain; its full sequence is Peptidase S41 family protein phomP1' (666 aa).

An N-terminal signal peptide occupies residues 1–27 (MSSFLVQTAVVRLFLLGVVFWFPFALS). 3 N-linked (GlcNAc...) asparagine glycosylation sites follow: N70, N214, and N234. Residues 303-504 (DVAVLQITSF…LLQAQGVRTV (202 aa)) are peptidase S41 domain. N-linked (GlcNAc...) asparagine glycosylation is found at N555 and N612.

It belongs to the peptidase S41A family.

The protein operates within mycotoxin biosynthesis. Its function is as follows. Peptidase S41 family protein; part of the gene cluster that mediates the biosynthesis of the phomopsins, a group of hexapeptide mycotoxins which infects lupins and causes lupinosis disease in livestock. Within the pathway, phomP1 and phomP1' are probably involved in the processing of the phomA and phomA' precursors. The pathway starts with the processing of the precursor phomA by several endopeptidases including kexin proteases as well as the cluster-specific S41 family peptidase phomP1 and the oligopeptidase phomG to produce 10 identical copies of the hexapeptide Tyr-Val-Ile-Pro-Ile-Asp. After being excised from the precursor peptide, the core peptides are cyclized and modified post-translationally by enzymes encoded within the gene cluster. The timing and order of proteolysis of the phomA precursor and PTMs are still unknown. Two tyrosinase-like enzymes, phomQ1 and phomQ2, catalyze the chlorination and hydroxylation of Tyr, respectively. PhomYb, is proposed to be involved in the construction of the macrocyclic structure. The other 4 ustYa family proteins may be involved in PTMs that generate the unique structure of phomopsin A. PhomYa is required for the hydroxylation of C-beta of Tyr. PhomYc, phomYd, and phomYe are responsible for the biosynthesis of 2,3-dehydroisoleucine (dIle), 2,3-dehydroaspartic acid (dAsp), and 3,4-dehydroproline (dPro), respectively. While dIle formation by phomYc is indispensable for the installation of dAsp by phomYd, the order of the other PTMs have not been elucidated yet. Most of the biosynthetic enzymes likely have broad substrate specificity, and thus, there might be a metabolic grid from a precursor to phomopsin A. The enzyme(s) responsible for the biosynthesis of 3,4-dehydrovaline (dVal) have also not been identified yet. Finally, phomM acts as an S-adenosylmethionine-dependent alpha-N-methyltransferase that catalyzes two successive N-methylation reactions, converting N-desmethyl-phomopsin A to phomopsin A and phomopsin A further to an N,N-dimethylated congener called phomopsin E. This chain is Peptidase S41 family protein phomP1', found in Diaporthe leptostromiformis (Lupinosis disease fungus).